The chain runs to 275 residues: Chlorophyll a-b binding protein 3, chloroplastic (275 aa).

Trp-58 serves as a coordination point for chlorophyll b. Positions 78, 84, and 102 each coordinate chlorophyll a. 4 residues coordinate chlorophyll b: Arg-107, Ile-142, Glu-169, and Arg-172. Chlorophyll a-binding residues include Lys-226, Glu-227, Asn-230, Arg-232, Gln-244, and His-259. Residues Leu-233–Tyr-253 form a helical membrane-spanning segment.

Belongs to the light-harvesting chlorophyll a/b-binding (LHC) protein family. In terms of assembly, the LHC complex consists of chlorophyll a-b binding proteins. It depends on Binds at least 14 chlorophylls (8 Chl-a and 6 Chl-b) and carotenoids such as lutein and neoxanthin. as a cofactor. Post-translationally, photoregulated by reversible phosphorylation of its threonine residues.

The protein localises to the plastid. It is found in the chloroplast thylakoid membrane. Functionally, the light-harvesting complex (LHC) functions as a light receptor, it captures and delivers excitation energy to photosystems with which it is closely associated. May channel protons produced in the catalytic Mn center of water oxidation into the thylakoid lumen. The chain is Chlorophyll a-b binding protein 3, chloroplastic from Pisum sativum (Garden pea).